The chain runs to 235 residues: 7-carboxy-7-deazaguanine synthase (235 aa).

Residues Ile25–Gly27 and Arg40 each bind substrate. The region spanning Phe31 to Pro235 is the Radical SAM core domain. [4Fe-4S] cluster is bound by residues Cys44, Cys48, and Cys51. Thr53 is a binding site for Mg(2+). Thr85 contacts substrate. S-adenosyl-L-methionine-binding positions include Gly87 and Ser135 to Lys137. Pro235 serves as a coordination point for substrate.

This sequence belongs to the radical SAM superfamily. 7-carboxy-7-deazaguanine synthase family. As to quaternary structure, homodimer. The cofactor is [4Fe-4S] cluster. Requires S-adenosyl-L-methionine as cofactor. Mg(2+) is required as a cofactor.

It catalyses the reaction 6-carboxy-5,6,7,8-tetrahydropterin + H(+) = 7-carboxy-7-deazaguanine + NH4(+). Its pathway is purine metabolism; 7-cyano-7-deazaguanine biosynthesis. In terms of biological role, catalyzes the complex heterocyclic radical-mediated conversion of 6-carboxy-5,6,7,8-tetrahydropterin (CPH4) to 7-carboxy-7-deazaguanine (CDG), a step common to the biosynthetic pathways of all 7-deazapurine-containing compounds. This chain is 7-carboxy-7-deazaguanine synthase, found in Hyperthermus butylicus (strain DSM 5456 / JCM 9403 / PLM1-5).